A 443-amino-acid chain; its full sequence is MEEDIDTRKINNSFLRDHSYATEADIISAVEFNHTGELLATGDKGGRVVIFQREQESKNQVHRRGEYNVYSTFQSHEPEFDYLKSLEIEEKINKIRWLPQQNAAYFLLSTNDKTVKLWKVSERDKRPEGYNLKDEEGRLRDPATITTLRVPVLRPMDLMVEATPRRVFANAHTYHINSISVNSDYETYMSADDLRINLWNFEITNQSFNIADIKPANMEELTEVITAAEFHPHHCNTFVYSSSKGTIRLCDMRASACVTGTPNFLKEPEDPSNRSFSLKLSSSISDVKFSQQWEDIMTRDYLTVKVWDLNMENRPIETYQVHNYLRSKLCSLYENDCIFDKFECVWNGSDSVIMTGSYNNFFRMFDRNTKRDVTLEASRENSKPRAILKPRKVCVGGKRRKDEISVDSLDFSKKILHTAWHPSENIIAVAATNNLYIFQDKVN.

WD repeat units lie at residues 22–61 (TEAD…KNQV), 87–128 (EIEE…KRPE), 171–209 (AHTY…QSFN), and 220–260 (ELTE…CVTG). Position 275 is a phosphoserine (Ser-275). 3 WD repeats span residues 279–317 (KLSS…RPIE), 334–375 (ENDC…DVTL), and 410–442 (DFSK…QDKV). A Phosphothreonine modification is found at Thr-298.

Belongs to the phosphatase 2A regulatory subunit B family. In terms of assembly, PP2A consists of a common heterodimeric core enzyme, composed of a 36 kDa catalytic subunit (subunit C) and a 65 kDa constant regulatory subunit (PR65 or subunit A), that associates with a variety of regulatory subunits. Proteins that associate with the core dimer include three families of regulatory subunits B (the R2/B/PR55/B55, R3/B''/PR72/PR130/PR59 and R5/B'/B56 families), the 48 kDa variable regulatory subunit, viral proteins, and cell signaling molecules. Interacts with TOMM22. Interacts with IER5 (via N- and C-terminal regions). In terms of tissue distribution, brain.

Its subcellular location is the cytoplasm. The protein localises to the cytoskeleton. It localises to the membrane. Its function is as follows. The B regulatory subunit might modulate substrate selectivity and catalytic activity, and might also direct the localization of the catalytic enzyme to a particular subcellular compartment. The sequence is that of Serine/threonine-protein phosphatase 2A 55 kDa regulatory subunit B beta isoform (PPP2R2B) from Sus scrofa (Pig).